The primary structure comprises 581 residues: MTIDFRNVNTLWASILVETLHRLGLTTAVICPGSRSTPLTIAFANHSNIEAIPILDERSASFFALGIAKKSGLPVVLVCTSGTAGANFYPAVIEAKESHVPLLILTADRPPELRHCHAGQTIDQVKLYGNYPNWQTEIAVPSAEEGMINYLRQTLIYAWERSLFPARGVVHLNLPFREPLAPIPNSDTEKIQFNFDVENFFTEINLLNFPSSNRIEKYEKIIPKWQLFQRGIIIAGVDHSYNPQEYCRAIARLSEFLKYPVLGEALSPVRNYAALNPYLISTYDLILRNSSLAENLKPDIVIQIGELPTSKELRTWLDITQPPRWIIDNKGENLDALHGKTIHLRTSIEQLANSLSFKETISNSPYLKLWCDTEKKVRKTIDQTLESIDSLLEGKIAWLLSQTLPENTPIFIANSMSVRNAEFFWQPNNFKYIPYFNRGANGIDGTLSTALGIAHHHQSSVMLTGDLALLHDNNGFLINKKFRGHLTIILVNNDGGGIFEMLPIAQFDPYFEDFFATPQTVNFGKLCLAYGIDHYLIQDWQQLKQLLNPLPETGIRVLELNTNRKLDAEWLKTNLSKFSLT.

Belongs to the TPP enzyme family. MenD subfamily. In terms of assembly, homodimer. The cofactor is Mg(2+). Requires Mn(2+) as cofactor. Thiamine diphosphate serves as cofactor.

It catalyses the reaction isochorismate + 2-oxoglutarate + H(+) = 5-enolpyruvoyl-6-hydroxy-2-succinyl-cyclohex-3-ene-1-carboxylate + CO2. It functions in the pathway quinol/quinone metabolism; 1,4-dihydroxy-2-naphthoate biosynthesis; 1,4-dihydroxy-2-naphthoate from chorismate: step 2/7. The protein operates within cofactor biosynthesis; phylloquinone biosynthesis. Catalyzes the thiamine diphosphate-dependent decarboxylation of 2-oxoglutarate and the subsequent addition of the resulting succinic semialdehyde-thiamine pyrophosphate anion to isochorismate to yield 2-succinyl-5-enolpyruvyl-6-hydroxy-3-cyclohexene-1-carboxylate (SEPHCHC). This chain is 2-succinyl-5-enolpyruvyl-6-hydroxy-3-cyclohexene-1-carboxylate synthase, found in Gloeothece citriformis (strain PCC 7424) (Cyanothece sp. (strain PCC 7424)).